The sequence spans 461 residues: tRNA-2-methylthio-N(6)-dimethylallyladenosine synthase (461 aa).

In terms of domain architecture, MTTase N-terminal spans lysine 18 to lysine 134. [4Fe-4S] cluster-binding residues include cysteine 27, cysteine 63, cysteine 97, cysteine 172, cysteine 176, and cysteine 179. Residues cysteine 158–glutamate 388 enclose the Radical SAM core domain. One can recognise a TRAM domain in the interval lysine 391–cysteine 454.

Belongs to the methylthiotransferase family. MiaB subfamily. In terms of assembly, monomer. [4Fe-4S] cluster serves as cofactor.

It is found in the cytoplasm. It carries out the reaction N(6)-dimethylallyladenosine(37) in tRNA + (sulfur carrier)-SH + AH2 + 2 S-adenosyl-L-methionine = 2-methylsulfanyl-N(6)-dimethylallyladenosine(37) in tRNA + (sulfur carrier)-H + 5'-deoxyadenosine + L-methionine + A + S-adenosyl-L-homocysteine + 2 H(+). In terms of biological role, catalyzes the methylthiolation of N6-(dimethylallyl)adenosine (i(6)A), leading to the formation of 2-methylthio-N6-(dimethylallyl)adenosine (ms(2)i(6)A) at position 37 in tRNAs that read codons beginning with uridine. In Syntrophus aciditrophicus (strain SB), this protein is tRNA-2-methylthio-N(6)-dimethylallyladenosine synthase.